Here is a 433-residue protein sequence, read N- to C-terminus: Glutamate-1-semialdehyde 2,1-aminomutase (433 aa).

Lys-271 is modified (N6-(pyridoxal phosphate)lysine).

It belongs to the class-III pyridoxal-phosphate-dependent aminotransferase family. HemL subfamily. In terms of assembly, homodimer. Pyridoxal 5'-phosphate is required as a cofactor.

Its subcellular location is the cytoplasm. It carries out the reaction (S)-4-amino-5-oxopentanoate = 5-aminolevulinate. It functions in the pathway porphyrin-containing compound metabolism; protoporphyrin-IX biosynthesis; 5-aminolevulinate from L-glutamyl-tRNA(Glu): step 2/2. It participates in porphyrin-containing compound metabolism; chlorophyll biosynthesis. This Prochlorococcus marinus (strain MIT 9215) protein is Glutamate-1-semialdehyde 2,1-aminomutase.